The following is a 132-amino-acid chain: Small ribosomal subunit protein uS8 (132 aa).

It belongs to the universal ribosomal protein uS8 family. Part of the 30S ribosomal subunit. Contacts proteins S5 and S12.

Its function is as follows. One of the primary rRNA binding proteins, it binds directly to 16S rRNA central domain where it helps coordinate assembly of the platform of the 30S subunit. This chain is Small ribosomal subunit protein uS8, found in Mycobacterium avium (strain 104).